A 166-amino-acid polypeptide reads, in one-letter code: UPF0254 protein Mevan_0254 (166 aa).

The protein belongs to the UPF0254 family.

This Methanococcus vannielii (strain ATCC 35089 / DSM 1224 / JCM 13029 / OCM 148 / SB) protein is UPF0254 protein Mevan_0254.